Consider the following 232-residue polypeptide: RNA chaperone ProQ (232 aa).

The tract at residues 105 to 182 (EAKARVQAQR…REEQHTPVSD (78 aa)) is disordered. Basic and acidic residues-rich tracts occupy residues 117 to 138 (QQAK…PPRE) and 147 to 177 (RRKE…EEQH).

It belongs to the ProQ family.

It localises to the cytoplasm. In terms of biological role, RNA chaperone with significant RNA binding, RNA strand exchange and RNA duplexing activities. May regulate ProP activity through an RNA-based, post-transcriptional mechanism. The polypeptide is RNA chaperone ProQ (Escherichia coli O139:H28 (strain E24377A / ETEC)).